The following is a 699-amino-acid chain: MTLVMSPDSSYGRYDAPTPTDVTSPVHREREPELHIEFDGTTVLCRVCGDKASGFHYGVHSCEGCKGFFRRSIQQKIQYRPCTKNQQCSILRINRNRCQYCRLKKCIAVGMSRDAVRFGRVPKREKARILAAMQQSSTSRAHEQAAAAELDDAPRLLARVVRAHLDTCEFTRDRVAAMRARARDCPTYSQPTLACPLNPAPELQSEKEFSQRFAHVIRGVIDFAGLIPGFQLLTQDDKFTLLKSGLFDALFVRLICMFDAPLNSIICLNGQLMKRDSIQSGANARFLVDSTFKFAERMNSMNLTDAEIGLFCAIVLITPDRPGLRNVELVERMHTRLKACLQTVIAQNRPDRPGFLRELMDTLPDLRTLSTLHTEKLVVFRTEHKELLRQQMWSEEEAVSWVDSGADELARSPIGSVSSSESGEAVGDCGTPLLAATLAGRRRLDSRGSVDEEALGVAHLAHNGLTVTPVRQPPRYRKLDSPTDSGIESGNEKHERIVGTGSGCSSPRSSLEEHNEDRRPPVSADDMPVLKRVLQAPPLYGGTPSLMDEAYRRHKKFRALRRDTGEAEARTVRPTPSPQPQHPHPANPAHPAHSPRPQRASLSSTHSVLAKSLMEGPRMTPEQLKRTDIIQQYMRRGESSAPAEGCPLRAGGLLTCYRGASPAPQPVLALQVDVTDAPLNLSKKSPSPPRTYMPQMLEA.

Residues 1 to 31 (MTLVMSPDSSYGRYDAPTPTDVTSPVHRERE) form a disordered region. A DNA-binding region (nuclear receptor) is located at residues 42–118 (TVLCRVCGDK…VGMSRDAVRF (77 aa)). NR C4-type zinc fingers lie at residues 45 to 65 (CRVC…CEGC) and 82 to 106 (CTKN…LKKC). Positions 152 to 399 (DAPRLLARVV…QQMWSEEEAV (248 aa)) constitute an NR LBD domain. Disordered regions lie at residues 466–528 (TVTP…DDMP), 561–607 (RRDT…STHS), and 679–699 (LNLS…MLEA). Basic and acidic residues-rich tracts occupy residues 510–520 (SLEEHNEDRRP) and 561–571 (RRDTGEAEART). Pro residues predominate over residues 575-588 (TPSPQPQHPHPANP).

Belongs to the nuclear hormone receptor family. NR1 subfamily.

It localises to the nucleus. Functionally, implicated in the regulation of ecdysone-triggered gene hierarchies. Probably plays a key role in mediating the regulation of the larval molt by 20-OH-ecdysone. The protein is Ecdysone-inducible protein E75 (E75) of Manduca sexta (Tobacco hawkmoth).